Consider the following 375-residue polypeptide: N-acetyldiaminopimelate deacetylase (375 aa).

Asp-69 is an active-site residue. Residue Glu-128 is the Proton acceptor of the active site.

This sequence belongs to the peptidase M20A family. N-acetyldiaminopimelate deacetylase subfamily.

The enzyme catalyses N-acetyl-(2S,6S)-2,6-diaminopimelate + H2O = (2S,6S)-2,6-diaminopimelate + acetate. The protein operates within amino-acid biosynthesis; L-lysine biosynthesis via DAP pathway; LL-2,6-diaminopimelate from (S)-tetrahydrodipicolinate (acetylase route): step 3/3. Functionally, catalyzes the conversion of N-acetyl-diaminopimelate to diaminopimelate and acetate. The chain is N-acetyldiaminopimelate deacetylase from Streptococcus suis (strain 05ZYH33).